Here is a 311-residue protein sequence, read N- to C-terminus: HPr kinase/phosphorylase (311 aa).

Active-site residues include histidine 139 and lysine 160. 154–161 (GDSGVGKS) provides a ligand contact to ATP. Serine 161 lines the Mg(2+) pocket. Residue aspartate 178 is the Proton acceptor; for phosphorylation activity. Proton donor; for dephosphorylation activity of the active site. An important for the catalytic mechanism of both phosphorylation and dephosphorylation region spans residues 202-211 (LEIRGIGIID). Residue glutamate 203 coordinates Mg(2+). Residue arginine 244 is part of the active site. Residues 265-270 (PVKTGR) are important for the catalytic mechanism of dephosphorylation.

Belongs to the HPrK/P family. In terms of assembly, homohexamer. Requires Mg(2+) as cofactor.

The catalysed reaction is [HPr protein]-L-serine + ATP = [HPr protein]-O-phospho-L-serine + ADP + H(+). It carries out the reaction [HPr protein]-O-phospho-L-serine + phosphate + H(+) = [HPr protein]-L-serine + diphosphate. Catalyzes the ATP- as well as the pyrophosphate-dependent phosphorylation of a specific serine residue in HPr, a phosphocarrier protein of the phosphoenolpyruvate-dependent sugar phosphotransferase system (PTS). HprK/P also catalyzes the pyrophosphate-producing, inorganic phosphate-dependent dephosphorylation (phosphorolysis) of seryl-phosphorylated HPr (P-Ser-HPr). The two antagonistic activities of HprK/P are regulated by several intracellular metabolites, which change their concentration in response to the absence or presence of rapidly metabolisable carbon sources (glucose, fructose, etc.) in the growth medium. Therefore, by controlling the phosphorylation state of HPr, HPrK/P is a sensor enzyme that plays a major role in the regulation of carbon metabolism and sugar transport: it mediates carbon catabolite repression (CCR), and regulates PTS-catalyzed carbohydrate uptake and inducer exclusion. The polypeptide is HPr kinase/phosphorylase (Levilactobacillus brevis (strain ATCC 367 / BCRC 12310 / CIP 105137 / JCM 1170 / LMG 11437 / NCIMB 947 / NCTC 947) (Lactobacillus brevis)).